We begin with the raw amino-acid sequence, 341 residues long: S-adenosylmethionine:tRNA ribosyltransferase-isomerase (341 aa).

Belongs to the QueA family. As to quaternary structure, monomer.

It is found in the cytoplasm. It catalyses the reaction 7-aminomethyl-7-carbaguanosine(34) in tRNA + S-adenosyl-L-methionine = epoxyqueuosine(34) in tRNA + adenine + L-methionine + 2 H(+). Its pathway is tRNA modification; tRNA-queuosine biosynthesis. Transfers and isomerizes the ribose moiety from AdoMet to the 7-aminomethyl group of 7-deazaguanine (preQ1-tRNA) to give epoxyqueuosine (oQ-tRNA). The sequence is that of S-adenosylmethionine:tRNA ribosyltransferase-isomerase from Pelodictyon phaeoclathratiforme (strain DSM 5477 / BU-1).